The chain runs to 448 residues: Ribosomal protein uS12 methylthiotransferase RimO (448 aa).

The MTTase N-terminal domain maps to 6-116 (PKVGIVSLGC…VVEAVHAAIP (111 aa)). Residues cysteine 15, cysteine 51, cysteine 80, cysteine 147, cysteine 151, and cysteine 154 each coordinate [4Fe-4S] cluster. A Radical SAM core domain is found at 133-371 (LTPHHYAYLK…EAARQIADER (239 aa)). The TRAM domain occupies 373 to 439 (AAKEGTRIEV…DYDLWGDVVE (67 aa)).

This sequence belongs to the methylthiotransferase family. RimO subfamily. [4Fe-4S] cluster is required as a cofactor.

The protein resides in the cytoplasm. It carries out the reaction L-aspartate(89)-[ribosomal protein uS12]-hydrogen + (sulfur carrier)-SH + AH2 + 2 S-adenosyl-L-methionine = 3-methylsulfanyl-L-aspartate(89)-[ribosomal protein uS12]-hydrogen + (sulfur carrier)-H + 5'-deoxyadenosine + L-methionine + A + S-adenosyl-L-homocysteine + 2 H(+). Functionally, catalyzes the methylthiolation of an aspartic acid residue of ribosomal protein uS12. In Paramagnetospirillum magneticum (strain ATCC 700264 / AMB-1) (Magnetospirillum magneticum), this protein is Ribosomal protein uS12 methylthiotransferase RimO.